Here is an 853-residue protein sequence, read N- to C-terminus: FIGNL1-interacting regulator of recombination and mitosis (853 aa).

Phosphoserine; by PLK1 occurs at positions 43 and 744. At K792 the chain carries N6-acetyllysine.

In terms of assembly, interacts (via its N-terminal region) with PLK1; controls PLK1 kinase activity. Interacts (via the KVVXF motif) with PPP1CC; controls PLK1 kinase activity. Interacts with FIGNL1; may regulate homologous recombination. In terms of processing, phosphorylation at Ser-43 by PLK1 strengthens FIRRM-PLK1 interaction. Phosphorylation at Ser-744 by PLK1 negatively regulates its interaction with PPP1CC.

The protein localises to the chromosome. The protein resides in the centromere. It localises to the kinetochore. It is found in the nucleus. Its subcellular location is the midbody. The protein localises to the cytoplasm. The protein resides in the cytoskeleton. It localises to the spindle. Functionally, regulates PLK1 kinase activity at kinetochores and promotes faithful chromosome segregation in prometaphase by bridging kinase and phosphatase activities. Phosphorylation of FIRRM by PLK1 negatively regulates its interaction with the phosphatase, PPP1CC, thus creating a negative feedback loop for maintaining proper PLK1 kinase activity during mitosis. In complex with FIGL1 may regulate homologous recombination. The chain is FIGNL1-interacting regulator of recombination and mitosis from Homo sapiens (Human).